The chain runs to 447 residues: Ribulose bisphosphate carboxylase large chain (447 aa).

Positions 89 and 139 each coordinate substrate. K141 acts as the Proton acceptor in catalysis. K143 contacts substrate. Residues K167, D169, and E170 each contribute to the Mg(2+) site. An N6-carboxylysine modification is found at K167. The active-site Proton acceptor is H260. Substrate-binding residues include R261, H293, and S345.

Belongs to the RuBisCO large chain family. Type I subfamily. As to quaternary structure, heterohexadecamer of 8 large chains and 8 small chains; disulfide-linked. The disulfide link is formed within the large subunit homodimers. It depends on Mg(2+) as a cofactor. Post-translationally, the disulfide bond which can form in the large chain dimeric partners within the hexadecamer appears to be associated with oxidative stress and protein turnover.

The protein resides in the plastid. It localises to the chloroplast. It carries out the reaction 2 (2R)-3-phosphoglycerate + 2 H(+) = D-ribulose 1,5-bisphosphate + CO2 + H2O. The catalysed reaction is D-ribulose 1,5-bisphosphate + O2 = 2-phosphoglycolate + (2R)-3-phosphoglycerate + 2 H(+). Its function is as follows. RuBisCO catalyzes two reactions: the carboxylation of D-ribulose 1,5-bisphosphate, the primary event in carbon dioxide fixation, as well as the oxidative fragmentation of the pentose substrate in the photorespiration process. Both reactions occur simultaneously and in competition at the same active site. This is Ribulose bisphosphate carboxylase large chain from Convolvulus tricolor (Dwarf morning glory).